A 161-amino-acid polypeptide reads, in one-letter code: uncharacterized protein (161 aa).

Residues 1–16 (MPRAGRAPAEGGPAPG) are compositionally biased toward low complexity. Disordered regions lie at residues 1-23 (MPRA…SRCL), 50-91 (GRPV…TQSA), and 140-161 (RGPA…WRIS).

This is an uncharacterized protein from Homo sapiens (Human).